Consider the following 484-residue polypeptide: Calcium-dependent protein kinase 26 (484 aa).

In terms of domain architecture, Protein kinase spans 24–282; the sequence is YSLGHKLGQG…AHQVLRHPWI (259 aa). Residues 30–38 and Lys53 each bind ATP; that span reads LGQGQFGTT. Asp148 functions as the Proton acceptor in the catalytic mechanism. The residue at position 188 (Ser188) is a Phosphoserine. Residues 288-318 are autoinhibitory domain; it reads APDRALDPAVLSRLKQFSAMNKLKQMALRVI. EF-hand domains lie at 325 to 360, 361 to 396, 397 to 432, and 436 to 466; these read EEIA…YGST, LKDT…LNKL, EREE…QGMS, and LEDV…GIVG. Ca(2+)-binding residues include Asp338, Asp340, Ser342, Glu349, Asp374, Asp376, Ser378, Thr380, Glu385, Asp410, Asp412, Ser414, Tyr416, Glu421, Asp444, Asp446, Asp448, Arg450, and Glu455.

This sequence belongs to the protein kinase superfamily. Ser/Thr protein kinase family. CDPK subfamily.

It catalyses the reaction L-seryl-[protein] + ATP = O-phospho-L-seryl-[protein] + ADP + H(+). The enzyme catalyses L-threonyl-[protein] + ATP = O-phospho-L-threonyl-[protein] + ADP + H(+). With respect to regulation, activated by calcium. Autophosphorylation may play an important role in the regulation of the kinase activity. Functionally, may play a role in signal transduction pathways that involve calcium as a second messenger. The polypeptide is Calcium-dependent protein kinase 26 (CPK26) (Arabidopsis thaliana (Mouse-ear cress)).